Here is a 137-residue protein sequence, read N- to C-terminus: Putative transcription elongation factor S-II-like protein 055R (137 aa).

The TFIIS-type zinc-finger motif lies at 85–136 (DFITCPYEVSEGVLRCGKCDCTKILWFSKQTRSMDEPTTIFASCSNCKTRWT). Zn(2+)-binding residues include cysteine 89, cysteine 103, cysteine 128, and cysteine 131.

It belongs to the IIV-6 349L family.

The polypeptide is Putative transcription elongation factor S-II-like protein 055R (Aedes vexans (Inland floodwater mosquito)).